Consider the following 360-residue polypeptide: GTPase Obg (360 aa).

In terms of domain architecture, Obg spans 1 to 156 (MFVDSVEIII…KCVRLELKLI (156 aa)). An OBG-type G domain is found at 157-360 (ADIGLVGFPN…LKFVLLEALP (204 aa)). GTP-binding positions include 163-170 (GFPNAGKS), 188-192 (FTTLV), 210-213 (DIPG), 279-282 (NKCD), and 341-343 (SAV). Mg(2+)-binding residues include S170 and T190.

Belongs to the TRAFAC class OBG-HflX-like GTPase superfamily. OBG GTPase family. In terms of assembly, monomer. It depends on Mg(2+) as a cofactor.

The protein localises to the cytoplasm. In terms of biological role, an essential GTPase which binds GTP, GDP and possibly (p)ppGpp with moderate affinity, with high nucleotide exchange rates and a fairly low GTP hydrolysis rate. Plays a role in control of the cell cycle, stress response, ribosome biogenesis and in those bacteria that undergo differentiation, in morphogenesis control. The protein is GTPase Obg of Helicobacter pylori (strain ATCC 700392 / 26695) (Campylobacter pylori).